The chain runs to 299 residues: Very long chain fatty acid elongase 5 (299 aa).

Methionine 1 carries the N-acetylmethionine modification. 7 helical membrane passes run 26–46 (WFLL…LLIV), 64–84 (ILVV…CELV), 112–132 (VLWW…FFIL), 139–158 (ITVL…WFVM), 168–187 (FGAT…YGLS), 205–225 (GQLL…IWPC), and 226–246 (TFPL…ITLF). Residue serine 285 is modified to Phosphoserine.

Belongs to the ELO family. ELOVL5 subfamily. Interacts with TECR.

Its subcellular location is the endoplasmic reticulum membrane. The protein localises to the cell projection. It localises to the dendrite. It carries out the reaction a very-long-chain acyl-CoA + malonyl-CoA + H(+) = a very-long-chain 3-oxoacyl-CoA + CO2 + CoA. The enzyme catalyses (6Z,9Z,12Z)-octadecatrienoyl-CoA + malonyl-CoA + H(+) = (8Z,11Z,14Z)-3-oxoeicosatrienoyl-CoA + CO2 + CoA. The catalysed reaction is (9Z,12Z,15Z)-octadecatrienoyl-CoA + malonyl-CoA + H(+) = (11Z,14Z,17Z)-3-oxoeicosatrienoyl-CoA + CO2 + CoA. It catalyses the reaction (9Z)-hexadecenoyl-CoA + malonyl-CoA + H(+) = 3-oxo-(11Z)-octadecenoyl-CoA + CO2 + CoA. It carries out the reaction (9Z)-octadecenoyl-CoA + malonyl-CoA + H(+) = 3-oxo-(11Z)-eicosenoyl-CoA + CO2 + CoA. The enzyme catalyses (11Z)-octadecenoyl-CoA + malonyl-CoA + H(+) = 3-oxo-(13Z)-eicosenoyl-CoA + CO2 + CoA. The catalysed reaction is (9Z,12Z)-octadecadienoyl-CoA + malonyl-CoA + H(+) = (11Z,14Z)-3-oxoicosa-11,14-dienoyl-CoA + CO2 + CoA. It catalyses the reaction (6Z,9Z,12Z,15Z)-octadecatetraenoyl-CoA + malonyl-CoA + H(+) = (8Z,11Z,14Z,17Z)-3-oxoicosatetraenoyl-CoA + CO2 + CoA. It carries out the reaction (5Z,8Z,11Z,14Z)-eicosatetraenoyl-CoA + malonyl-CoA + H(+) = (7Z,10Z,13Z,16Z)-3-oxodocosatetraenoyl-CoA + CO2 + CoA. The enzyme catalyses (5Z,8Z,11Z,14Z,17Z)-eicosapentaenoyl-CoA + malonyl-CoA + H(+) = 3-oxo-(7Z,10Z,13Z,16Z,19Z)-docosapentaenoyl-CoA + CO2 + CoA. The protein operates within lipid metabolism; polyunsaturated fatty acid biosynthesis. Functionally, catalyzes the first and rate-limiting reaction of the four reactions that constitute the long-chain fatty acids elongation cycle. This endoplasmic reticulum-bound enzymatic process allows the addition of 2 carbons to the chain of long- and very long-chain fatty acids (VLCFAs) per cycle. Condensing enzyme that acts specifically toward polyunsaturated acyl-CoA with the higher activity toward C18:3(n-6) acyl-CoA. May participate in the production of monounsaturated and of polyunsaturated VLCFAs of different chain lengths that are involved in multiple biological processes as precursors of membrane lipids and lipid mediators. In conditions where the essential linoleic and alpha linoleic fatty acids are lacking it is also involved in the synthesis of Mead acid from oleic acid. This chain is Very long chain fatty acid elongase 5, found in Bos taurus (Bovine).